Here is a 422-residue protein sequence, read N- to C-terminus: NADH-quinone oxidoreductase subunit F (422 aa).

The interval 1–26 (MLKEEDKIFTNLHGQQSHDLKSSKKR) is disordered. Basic and acidic residues predominate over residues 16 to 26 (QSHDLKSSKKR). NAD(+) is bound at residue 54–63 (GRGGAGFSTG). 166–213 (GAGAYICGEETALLESLEGKKGMPRLKPPFPAGFGLYGCPTTINNVES) contacts FMN. [4Fe-4S] cluster is bound by residues cysteine 344, cysteine 347, cysteine 350, and cysteine 390.

It belongs to the complex I 51 kDa subunit family. FMN serves as cofactor. It depends on [4Fe-4S] cluster as a cofactor.

The catalysed reaction is a quinone + NADH + 5 H(+)(in) = a quinol + NAD(+) + 4 H(+)(out). In terms of biological role, NDH-1 shuttles electrons from NADH, via FMN and iron-sulfur (Fe-S) centers, to quinones in the respiratory chain. Couples the redox reaction to proton translocation (for every two electrons transferred, four hydrogen ions are translocated across the cytoplasmic membrane), and thus conserves the redox energy in a proton gradient. This chain is NADH-quinone oxidoreductase subunit F (nuoF), found in Rickettsia felis (strain ATCC VR-1525 / URRWXCal2) (Rickettsia azadi).